Consider the following 1188-residue polypeptide: DNA-directed RNA polymerase subunit beta (1188 aa).

The protein belongs to the RNA polymerase beta chain family. As to quaternary structure, the RNAP catalytic core consists of 2 alpha, 1 beta, 1 beta' and 1 omega subunit. When a sigma factor is associated with the core the holoenzyme is formed, which can initiate transcription.

It carries out the reaction RNA(n) + a ribonucleoside 5'-triphosphate = RNA(n+1) + diphosphate. Its function is as follows. DNA-dependent RNA polymerase catalyzes the transcription of DNA into RNA using the four ribonucleoside triphosphates as substrates. This is DNA-directed RNA polymerase subunit beta from Streptococcus pyogenes serotype M3 (strain ATCC BAA-595 / MGAS315).